The following is a 449-amino-acid chain: Glutamyl-tRNA reductase (449 aa).

Substrate-binding positions include 48 to 51 (TCNR), S99, 104 to 106 (EDQ), and Q110. C49 (nucleophile) is an active-site residue. 179-184 (GAGEIG) provides a ligand contact to NADP(+).

The protein belongs to the glutamyl-tRNA reductase family. Homodimer.

The catalysed reaction is (S)-4-amino-5-oxopentanoate + tRNA(Glu) + NADP(+) = L-glutamyl-tRNA(Glu) + NADPH + H(+). The protein operates within porphyrin-containing compound metabolism; protoporphyrin-IX biosynthesis; 5-aminolevulinate from L-glutamyl-tRNA(Glu): step 1/2. Its function is as follows. Catalyzes the NADPH-dependent reduction of glutamyl-tRNA(Glu) to glutamate 1-semialdehyde (GSA). The polypeptide is Glutamyl-tRNA reductase (Methanosarcina barkeri (strain Fusaro / DSM 804)).